We begin with the raw amino-acid sequence, 467 residues long: Cysteine--tRNA ligase (467 aa).

Position 27 (Cys27) interacts with Zn(2+). A 'HIGH' region motif is present at residues 29–39; that stretch reads ATVQGLPHIGH. The Zn(2+) site is built by Cys209, His234, and Glu238. The 'KMSKS' region signature appears at 265-269; sequence KMSKS. Lys268 provides a ligand contact to ATP.

This sequence belongs to the class-I aminoacyl-tRNA synthetase family. Monomer. Requires Zn(2+) as cofactor.

The protein localises to the cytoplasm. The catalysed reaction is tRNA(Cys) + L-cysteine + ATP = L-cysteinyl-tRNA(Cys) + AMP + diphosphate. The polypeptide is Cysteine--tRNA ligase (Mycolicibacterium gilvum (strain PYR-GCK) (Mycobacterium gilvum (strain PYR-GCK))).